The chain runs to 325 residues: ATP synthase gamma chain (325 aa).

It belongs to the ATPase gamma chain family. In terms of assembly, F-type ATPases have 2 components, CF(1) - the catalytic core - and CF(0) - the membrane proton channel. CF(1) has five subunits: alpha(3), beta(3), gamma(1), delta(1), epsilon(1). CF(0) has three main subunits: a, b and c.

The protein resides in the cell membrane. Its function is as follows. Produces ATP from ADP in the presence of a proton gradient across the membrane. The gamma chain is believed to be important in regulating ATPase activity and the flow of protons through the CF(0) complex. This chain is ATP synthase gamma chain, found in Corynebacterium glutamicum (strain R).